A 137-amino-acid chain; its full sequence is Large ribosomal subunit protein uL16 (137 aa).

This sequence belongs to the universal ribosomal protein uL16 family. As to quaternary structure, part of the 50S ribosomal subunit.

In terms of biological role, binds 23S rRNA and is also seen to make contacts with the A and possibly P site tRNAs. The sequence is that of Large ribosomal subunit protein uL16 from Streptococcus sanguinis (strain SK36).